We begin with the raw amino-acid sequence, 172 residues long: 6,7-dimethyl-8-ribityllumazine synthase (172 aa).

5-amino-6-(D-ribitylamino)uracil is bound by residues Phe24, 58–60 (ALE), and 82–84 (AVI). 87–88 (ET) is a (2S)-2-hydroxy-3-oxobutyl phosphate binding site. His90 serves as the catalytic Proton donor. Asn115 is a 5-amino-6-(D-ribitylamino)uracil binding site. Arg129 serves as a coordination point for (2S)-2-hydroxy-3-oxobutyl phosphate. Residues 150 to 172 (ALEQLDGDEDDEGEGEDDEEERA) are disordered. The span at 154–172 (LDGDEDDEGEGEDDEEERA) shows a compositional bias: acidic residues.

The protein belongs to the DMRL synthase family.

It carries out the reaction (2S)-2-hydroxy-3-oxobutyl phosphate + 5-amino-6-(D-ribitylamino)uracil = 6,7-dimethyl-8-(1-D-ribityl)lumazine + phosphate + 2 H2O + H(+). Its pathway is cofactor biosynthesis; riboflavin biosynthesis; riboflavin from 2-hydroxy-3-oxobutyl phosphate and 5-amino-6-(D-ribitylamino)uracil: step 1/2. Functionally, catalyzes the formation of 6,7-dimethyl-8-ribityllumazine by condensation of 5-amino-6-(D-ribitylamino)uracil with 3,4-dihydroxy-2-butanone 4-phosphate. This is the penultimate step in the biosynthesis of riboflavin. This chain is 6,7-dimethyl-8-ribityllumazine synthase, found in Paraburkholderia phymatum (strain DSM 17167 / CIP 108236 / LMG 21445 / STM815) (Burkholderia phymatum).